The following is a 336-amino-acid chain: uncharacterized protein (336 aa).

This is an uncharacterized protein from Alkalihalophilus pseudofirmus (strain ATCC BAA-2126 / JCM 17055 / OF4) (Bacillus pseudofirmus).